We begin with the raw amino-acid sequence, 512 residues long: Ammonium transporter 2 (512 aa).

Over 1–47 (MSSVNSIPTATSTVYISVLPATATPSGGSGGNVLHEDLNKFYDYGNT) the chain is Extracellular. Residues 48–68 (SWILACTPLCLIMVPGVAFFY) traverse the membrane as a helical segment. Topologically, residues 69–77 (SGLARRKNT) are cytoplasmic. A helical transmembrane segment spans residues 78 to 98 (LALIMLSMLGLCVSFFQWYFW). Residues 99–137 (GYSLAFSQTGTSGYIGNLRHFAFIRTLADYSPGSNNIPE) lie on the Extracellular side of the membrane. The chain crosses the membrane as a helical span at residues 138–158 (LVFANFQGMFAAITVALFTGA). Residues 159–167 (AAERGRIGP) lie on the Cytoplasmic side of the membrane. Residues 168–188 (MLIITFVWLTVVYCPIACWIW) form a helical membrane-spanning segment. Residues 189–201 (NPNGWAFKFGVYD) are Extracellular-facing. A helical membrane pass occupies residues 202–222 (FAGGGPVEVGSGFAALAYTVC). Residues 223 to 238 (LGRRSKFVEEQFRPHS) are Cytoplasmic-facing. Residues 239 to 259 (VLNVVLGTSLLWFGWLGFNGG) form a helical membrane-spanning segment. At 260–267 (SAYGSNLR) the chain is on the extracellular side. A helical membrane pass occupies residues 268 to 288 (AAMAITNTNLAGAVAGLVWVI). The Cytoplasmic portion of the chain corresponds to 289–300 (YDYIFRTRKWST). The helical transmembrane segment at 301 to 321 (IGFCSGVVAGLVAATPCAGFV) threads the bilayer. Ser-322 is a topological domain (extracellular). Residues 323–343 (PHASLAIGAITGLCCNWAIKL) form a helical membrane-spanning segment. Over 344 to 354 (KSHMRIDDAMD) the chain is Cytoplasmic. Residues 355 to 375 (IFAIHGVAGFVGTFLNGLFAV) traverse the membrane as a helical segment. Over 376–406 (DYIAAMDGIYVGENKIRGGWFDHHWRQLGLQ) the chain is Extracellular. A helical membrane pass occupies residues 407 to 427 (MAYICAVGAYDFVVTFIILFI). The Cytoplasmic segment spans residues 428-512 (TDKIPYLQLR…TNPLELGLTI (85 aa)).

The protein belongs to the ammonia transporter channel (TC 1.A.11.2) family.

It is found in the membrane. Its function is as follows. Transporter for ammonium to use as a nitrogen source. This is Ammonium transporter 2 (amt2) from Schizosaccharomyces pombe (strain 972 / ATCC 24843) (Fission yeast).